The primary structure comprises 31 residues: Protamine-Z (31 aa).

The segment at 1 to 31 (ARRRRSRRASRPVRRRRPRRVSRRRRARRRR) is disordered.

Testis.

The protein localises to the nucleus. The protein resides in the chromosome. In terms of biological role, protamines substitute for histones in the chromatin of sperm during the haploid phase of spermatogenesis. They compact sperm DNA into a highly condensed, stable and inactive complex. The protein is Protamine-Z of Clupea harengus (Atlantic herring).